A 141-amino-acid polypeptide reads, in one-letter code: Large ribosomal subunit protein uL11 (141 aa).

The protein belongs to the universal ribosomal protein uL11 family. As to quaternary structure, part of the ribosomal stalk of the 50S ribosomal subunit. Interacts with L10 and the large rRNA to form the base of the stalk. L10 forms an elongated spine to which L12 dimers bind in a sequential fashion forming a multimeric L10(L12)X complex. In terms of processing, one or more lysine residues are methylated.

Functionally, forms part of the ribosomal stalk which helps the ribosome interact with GTP-bound translation factors. The polypeptide is Large ribosomal subunit protein uL11 (Clostridium botulinum (strain Kyoto / Type A2)).